The following is a 432-amino-acid chain: Gamma-glutamyl phosphate reductase (432 aa).

The protein belongs to the gamma-glutamyl phosphate reductase family.

It is found in the cytoplasm. The enzyme catalyses L-glutamate 5-semialdehyde + phosphate + NADP(+) = L-glutamyl 5-phosphate + NADPH + H(+). The protein operates within amino-acid biosynthesis; L-proline biosynthesis; L-glutamate 5-semialdehyde from L-glutamate: step 2/2. Its function is as follows. Catalyzes the NADPH-dependent reduction of L-glutamate 5-phosphate into L-glutamate 5-semialdehyde and phosphate. The product spontaneously undergoes cyclization to form 1-pyrroline-5-carboxylate. In Methylorubrum populi (strain ATCC BAA-705 / NCIMB 13946 / BJ001) (Methylobacterium populi), this protein is Gamma-glutamyl phosphate reductase.